The sequence spans 804 residues: Zinc finger protein 541 (804 aa).

Disordered regions lie at residues 21-120 (SKAS…NPDI) and 133-197 (TLDL…GNPR). The C2H2-type 1 zinc-finger motif lies at 285–307 (FICKNCSQMFYTEKGLSSHMCFH). A disordered region spans residues 379–426 (MEQEKDGEERDSKESSQQRKRKKRPPPKRLFIPPPPSTAGEPGPAGCH). A compositionally biased stretch (basic and acidic residues) spans 380 to 395 (EQEKDGEERDSKESSQ). The segment covering 396 to 405 (QRKRKKRPPP) has biased composition (basic residues). The 93-residue stretch at 509–601 (PHINIGSRFQ…VALETLLLRG (93 aa)) folds into the ELM2 domain. The SANT domain occupies 616–667 (TGSDVWTPIEKRLFKKAFYAHKKDFYLIHKTIQTKTVAQCVEYYYIWKKMIK). The segment at 680–743 (VKREPEEVER…TPEPSGSVES (64 aa)) is disordered. The segment covering 690 to 721 (TEEKVPCSPRERPSHHPIPELKIKTKSYRRES) has biased composition (basic and acidic residues). The C2H2-type 2 zinc finger occupies 747–769 (FPCRECERVFDKIKSRNAHMKRH).

Interacts with DNTTIP1. Identified in a complex with KCDT19, HDAC1 and HSPA2s. Component of a histone deacetylase complex containing DNTTIP1, ZNF541, HDAC1 and HDAC2. Identified in a complex with HDAC1, HDAC2, DNTTIP1 and KCTD19.

It localises to the nucleus. Transcription regulator which is essential for male fertility and for the completion of meiotic prophase in spermatocytes. Regulates progression of the pachytene stage of meiotic prophase by activating the expression of genes involved in meiosis and post-meiosis during spermatogenesis. Maintains the repression of pre-pachytene transcriptional programs, including meiotic double-strand breaks (DSB) formation genes in pachytene spermatocytes and suppresses aberrant DSB formation after mid-pachytene, thus ensuring meiosis progression. The protein is Zinc finger protein 541 (ZNF541) of Macaca fascicularis (Crab-eating macaque).